A 385-amino-acid polypeptide reads, in one-letter code: Nonsense-mediated mRNA decay factor SMG9 (385 aa).

The interval 1–32 is disordered; that stretch reads MKKVEILKTSRPSSAGGAARPSTASPTHGAPK.

Belongs to the SMG9 family.

Involved in nonsense-mediated decay (NMD) of mRNAs containing premature stop codons. Probable component of kinase complex containing smg-1 and recruited to stalled ribosomes. The protein is Nonsense-mediated mRNA decay factor SMG9 (smg-9) of Caenorhabditis elegans.